The chain runs to 243 residues: CTD nuclear envelope phosphatase 1 homolog (243 aa).

A helical membrane pass occupies residues 11-27 (ALLLLLSKVWTCICFMF). Residues 56–223 (SLVQRKTLVL…LSLLPMLDAL (168 aa)) enclose the FCP1 homology domain.

Belongs to the dullard family.

It localises to the membrane. It carries out the reaction O-phospho-L-seryl-[protein] + H2O = L-seryl-[protein] + phosphate. The enzyme catalyses O-phospho-L-threonyl-[protein] + H2O = L-threonyl-[protein] + phosphate. Functionally, serine/threonine protein phosphatase that may dephosphorylate and activate lipin-like phosphatases. Lipins are phosphatidate phosphatases that catalyze the conversion of phosphatidic acid to diacylglycerol and control the metabolism of fatty acids at different levels. May indirectly modulate the lipid composition of nuclear and/or endoplasmic reticulum membranes and be required for proper nuclear membrane morphology and/or dynamics. May also indirectly regulate the production of lipid droplets and triacylglycerol. This Drosophila pseudoobscura pseudoobscura (Fruit fly) protein is CTD nuclear envelope phosphatase 1 homolog (l(1)G0269).